We begin with the raw amino-acid sequence, 152 residues long: Arginine repressor (152 aa).

This sequence belongs to the ArgR family.

The protein resides in the cytoplasm. It functions in the pathway amino-acid biosynthesis; L-arginine biosynthesis [regulation]. Regulates arginine biosynthesis genes. In Lactiplantibacillus plantarum (strain ATCC BAA-793 / NCIMB 8826 / WCFS1) (Lactobacillus plantarum), this protein is Arginine repressor.